The primary structure comprises 138 residues: Nucleoside diphosphate kinase (138 aa).

ATP is bound by residues K10, F58, R86, T92, R103, and N113. Catalysis depends on H116, which acts as the Pros-phosphohistidine intermediate.

This sequence belongs to the NDK family. Homotetramer. Mg(2+) serves as cofactor.

The protein localises to the cytoplasm. It catalyses the reaction a 2'-deoxyribonucleoside 5'-diphosphate + ATP = a 2'-deoxyribonucleoside 5'-triphosphate + ADP. It carries out the reaction a ribonucleoside 5'-diphosphate + ATP = a ribonucleoside 5'-triphosphate + ADP. In terms of biological role, major role in the synthesis of nucleoside triphosphates other than ATP. The ATP gamma phosphate is transferred to the NDP beta phosphate via a ping-pong mechanism, using a phosphorylated active-site intermediate. This is Nucleoside diphosphate kinase from Glaesserella parasuis serovar 5 (strain SH0165) (Haemophilus parasuis).